A 409-amino-acid polypeptide reads, in one-letter code: MARAKFERTKPHVNIGTIGHVDHGKTTLTAAITMTLAALGNAQAKKYDEIDAAPEEKARGITINTAHVEYETASRHYAHVDCPGHADYVKNMITGAAQMDGGILVVSAADGPMPQTREHILLARQVGVPNLVVFLNKKDMVDDEELLELVELEVRELLTNYDFAGDDIPIIAGSAKEALEYMTKNPKAQKGDNEWVDAIYELMEAVDSYIPTPERDIDKPFLMAVEDVFSITGRGTVATGRIERGIVKVGDNVELVGIRETRPTTVTGIEMFKKSLDQGMAGDNAGILLRGIQKTDIERGMVIAKPGTIKPHTQFEGEVYVLSKEEGGRHTPFFKNYRPQFYVRTTDVTGTIQDYTADDGSTVEMVMPGDRIKMTVELINPIAIEQGMRFAIREGGRTIGSGVISKIIK.

The 205-residue stretch at 10–214 (KPHVNIGTIG…AVDSYIPTPE (205 aa)) folds into the tr-type G domain. Residues 19-26 (GHVDHGKT) are G1. 19–26 (GHVDHGKT) lines the GTP pocket. Residue Thr-26 participates in Mg(2+) binding. The interval 60–64 (GITIN) is G2. Positions 81-84 (DCPG) are G3. Residues 81 to 85 (DCPGH) and 136 to 139 (NKKD) contribute to the GTP site. The interval 136–139 (NKKD) is G4. A G5 region spans residues 174–176 (SAK).

Belongs to the TRAFAC class translation factor GTPase superfamily. Classic translation factor GTPase family. EF-Tu/EF-1A subfamily. Monomer.

The protein resides in the cytoplasm. It carries out the reaction GTP + H2O = GDP + phosphate + H(+). Functionally, GTP hydrolase that promotes the GTP-dependent binding of aminoacyl-tRNA to the A-site of ribosomes during protein biosynthesis. The protein is Elongation factor Tu of Microcystis aeruginosa (strain NIES-843 / IAM M-2473).